A 146-amino-acid polypeptide reads, in one-letter code: Angiogenin (146 aa).

The N-terminal stretch at 1 to 24 (MVMGLGLFLLVFMLGLGLTPPTLA) is a signal peptide. Gln25 is subject to Pyrrolidone carboxylic acid. Residue His37 is the Proton acceptor of the active site. Arg45 is a binding site for tRNA. 3 cysteine pairs are disulfide-bonded: Cys50–Cys105, Cys63–Cys116, and Cys81–Cys131. The Nucleolar localization signal motif lies at 55-59 (RRRGL). TRNA-binding residues include Cys105 and Ile127. Catalysis depends on His138, which acts as the Proton donor.

The protein belongs to the pancreatic ribonuclease family. As to quaternary structure, homodimer. Interacts with RNH1; inhibiting ANG ribonuclease activity. Interacts with PCNA.

The protein localises to the secreted. It localises to the nucleus. Its subcellular location is the nucleolus. It is found in the cytoplasm. The protein resides in the stress granule. With respect to regulation, has weak tRNA ribonuclease activity by itself due to partial autoinhibition by its C-terminus, which folds into a short alpha-helix that partially occludes the substrate-binding site. In absence of stress, the ribonuclease activity is inhibited by RNH1 in the cytoplasm. In response to stress, dissociates from RNH1 in the cytoplasm and associates with cytoplasmic ribosomes with vacant A-sites: ribosomes directly activate the tRNA ribonuclease activity of ANG by refolding the C-terminal alpha-helix. In response to stress, the angiogenic activity of ANG is inhibited by RNH1 in the nucleus. In terms of biological role, secreted ribonuclease that can either promote or restrict cell proliferation of target cells, depending on the context. Endocytosed in target cells via its receptor PLXNB2 and translocates to the cytoplasm or nucleus. Under stress conditions, localizes to the cytoplasm and promotes the assembly of stress granules (SGs): specifically cleaves a subset of tRNAs within anticodon loops to produce tRNA-derived stress-induced fragments (tiRNAs), resulting in translation repression and inhibition of cell proliferation. tiRNas also prevent formation of apoptosome, thereby promoting cell survival. Preferentially cleaves RNAs between a pyrimidine and an adenosine residue, suggesting that it cleaves the anticodon loop of tRNA(Ala) (32-UUAGCAU-38) after positions 33 and 36. Cleaves a subset of tRNAs, including tRNA(Ala), tRNA(Glu), tRNA(Gly), tRNA(Lys), tRNA(Val), tRNA(His), tRNA(Asp) and tRNA(Sec). Under growth conditions and in differentiated cells, translocates to the nucleus and stimulates ribosomal RNA (rRNA) transcription, including that containing the initiation site sequences of 45S rRNA, thereby promoting cell growth and proliferation. Angiogenin induces vascularization of normal and malignant tissues via its ability to promote rRNA transcription. Involved in hematopoietic stem and progenitor cell (HSPC) growth and survival by promoting rRNA transcription in growth conditions and inhibiting translation in response to stress, respectively. Mediates the crosstalk between myeloid and intestinal epithelial cells to protect the intestinal epithelial barrier integrity: secreted by myeloid cells and promotes intestinal epithelial cells proliferation and survival. Also mediates osteoclast-endothelial cell crosstalk in growing bone: produced by osteoclasts and protects the neighboring vascular cells against senescence by promoting rRNA transcription. This is Angiogenin (ANG) from Trachypithecus francoisi (Francois' leaf monkey).